The chain runs to 82 residues: uncharacterized protein (82 aa).

This is an uncharacterized protein from Sinorhizobium fredii (strain NBRC 101917 / NGR234).